The sequence spans 262 residues: Type II pantothenate kinase (262 aa).

7–14 lines the ATP pocket; the sequence is DAGGSLVK. Glu-71 (proton acceptor) is an active-site residue. ATP-binding positions include Thr-101, 119 to 123, and Tyr-135; that span reads GGLLT.

The protein belongs to the type II pantothenate kinase family. Homodimer.

It localises to the cytoplasm. It carries out the reaction (R)-pantothenate + ATP = (R)-4'-phosphopantothenate + ADP + H(+). The protein operates within cofactor biosynthesis; coenzyme A biosynthesis; CoA from (R)-pantothenate: step 1/5. Functionally, catalyzes the phosphorylation of pantothenate (Pan), the first step in CoA biosynthesis. This chain is Type II pantothenate kinase, found in Oceanobacillus iheyensis (strain DSM 14371 / CIP 107618 / JCM 11309 / KCTC 3954 / HTE831).